The following is a 104-amino-acid chain: Iron-sulfur cluster assembly protein CyaY (104 aa).

Belongs to the frataxin family.

In terms of biological role, involved in iron-sulfur (Fe-S) cluster assembly. May act as a regulator of Fe-S biogenesis. This chain is Iron-sulfur cluster assembly protein CyaY, found in Aliivibrio fischeri (strain ATCC 700601 / ES114) (Vibrio fischeri).